A 163-amino-acid chain; its full sequence is NADPH-dependent 7-cyano-7-deazaguanine reductase (163 aa).

The segment covering methionine 1–arginine 10 has biased composition (basic residues). The interval methionine 1 to histidine 23 is disordered. The active-site Thioimide intermediate is the cysteine 61. Aspartate 68 (proton donor) is an active-site residue. Residues leucine 83–serine 85 and histidine 102–glutamate 103 each bind substrate.

This sequence belongs to the GTP cyclohydrolase I family. QueF type 1 subfamily.

The protein localises to the cytoplasm. It carries out the reaction 7-aminomethyl-7-carbaguanine + 2 NADP(+) = 7-cyano-7-deazaguanine + 2 NADPH + 3 H(+). Its pathway is tRNA modification; tRNA-queuosine biosynthesis. Functionally, catalyzes the NADPH-dependent reduction of 7-cyano-7-deazaguanine (preQ0) to 7-aminomethyl-7-deazaguanine (preQ1). This chain is NADPH-dependent 7-cyano-7-deazaguanine reductase, found in Rhodopseudomonas palustris (strain BisA53).